A 508-amino-acid polypeptide reads, in one-letter code: Anthranilate synthase component 1 (508 aa).

L-tryptophan-binding positions include S51 and 283 to 285 (PYM). A chorismate-binding site is contributed by 323–324 (GT). Residue E350 participates in Mg(2+) binding. Residues Y438, R458, 477 to 479 (GAG), and G479 contribute to the chorismate site. E492 is a binding site for Mg(2+).

This sequence belongs to the anthranilate synthase component I family. In terms of assembly, heterotetramer consisting of two non-identical subunits: a beta subunit (TrpG) and a large alpha subunit (TrpE). Mg(2+) is required as a cofactor.

The catalysed reaction is chorismate + L-glutamine = anthranilate + pyruvate + L-glutamate + H(+). The protein operates within amino-acid biosynthesis; L-tryptophan biosynthesis; L-tryptophan from chorismate: step 1/5. With respect to regulation, feedback inhibited by tryptophan. Functionally, part of a heterotetrameric complex that catalyzes the two-step biosynthesis of anthranilate, an intermediate in the biosynthesis of L-tryptophan. In the first step, the glutamine-binding beta subunit (TrpG) of anthranilate synthase (AS) provides the glutamine amidotransferase activity which generates ammonia as a substrate that, along with chorismate, is used in the second step, catalyzed by the large alpha subunit of AS (TrpE) to produce anthranilate. In the absence of TrpG, TrpE can synthesize anthranilate directly from chorismate and high concentrations of ammonia. The polypeptide is Anthranilate synthase component 1 (trpE) (Synechocystis sp. (strain ATCC 27184 / PCC 6803 / Kazusa)).